A 125-amino-acid chain; its full sequence is MISMANILFTEDHEWINVENGVATVGITIHAQEQLGDLVFVELPEVGRTVAKGDGVVVVESVKAASDVYAPVDGEVVEVNDAVASDPSLINQAAEGEGWLFKLKLADEGQLTGLLDKAGYEKLIG.

The 83-residue stretch at 22 to 104 (VATVGITIHA…EGEGWLFKLK (83 aa)) folds into the Lipoyl-binding domain. Position 63 is an N6-lipoyllysine (K63).

The protein belongs to the GcvH family. As to quaternary structure, the glycine cleavage system is composed of four proteins: P, T, L and H. (R)-lipoate serves as cofactor.

In terms of biological role, the glycine cleavage system catalyzes the degradation of glycine. The H protein shuttles the methylamine group of glycine from the P protein to the T protein. The polypeptide is Glycine cleavage system H protein (Brucella abortus (strain 2308)).